A 244-amino-acid chain; its full sequence is 1-(5-phosphoribosyl)-5-[(5-phosphoribosylamino)methylideneamino] imidazole-4-carboxamide isomerase (244 aa).

Aspartate 10 serves as the catalytic Proton acceptor. The active-site Proton donor is the aspartate 132.

Belongs to the HisA/HisF family.

It is found in the cytoplasm. It carries out the reaction 1-(5-phospho-beta-D-ribosyl)-5-[(5-phospho-beta-D-ribosylamino)methylideneamino]imidazole-4-carboxamide = 5-[(5-phospho-1-deoxy-D-ribulos-1-ylimino)methylamino]-1-(5-phospho-beta-D-ribosyl)imidazole-4-carboxamide. It functions in the pathway amino-acid biosynthesis; L-histidine biosynthesis; L-histidine from 5-phospho-alpha-D-ribose 1-diphosphate: step 4/9. The chain is 1-(5-phosphoribosyl)-5-[(5-phosphoribosylamino)methylideneamino] imidazole-4-carboxamide isomerase from Xanthomonas axonopodis pv. citri (strain 306).